Reading from the N-terminus, the 991-residue chain is Receptor-like protein kinase HAIKU2 (991 aa).

The N-terminal stretch at 1 to 19 (MLRLLFIVRLLFLMPLASS) is a signal peptide. At 20 to 616 (RSNHSEEVEN…KRKHLSKVDM (597 aa)) the chain is on the extracellular side. The N-linked (GlcNAc...) asparagine glycan is linked to N22. LRR repeat units follow at residues 66-90 (DGNV…RFTD), 99-123 (LKLL…LGKC), 125-148 (RLRY…SLQL), 150-170 (EFLS…SLKD), 171-196 (LKRL…ILNL), 197-220 (TALQ…IKNL), 221-244 (VRLQ…IVQL), 246-267 (NLRQ…GFRN), 269-291 (TNLR…LRFL), 292-314 (KNLV…EFGD), 315-339 (FKSL…LGSW), 341-363 (AFKY…MCKK), 365-387 (VMTH…YAKC), 388-411 (KTLI…IWGL), 413-435 (NLQF…IGNA), 436-459 (KSLG…ISGA), 461-482 (SLVS…SFGK), 483-508 (LKEL…GLCT), 510-531 (LVDL…LGSL), 532-554 (KLLN…GLSA), and 555-578 (LKLS…LVSG). N-linked (GlcNAc...) asparagine glycans are attached at residues N109, N135, N155, N195, and N206. N-linked (GlcNAc...) asparagine glycans are attached at residues N267 and N278. N-linked (GlcNAc...) asparagine glycosylation is found at N397 and N427. Residue N495 is glycosylated (N-linked (GlcNAc...) asparagine). N-linked (GlcNAc...) asparagine glycosylation is present at N538. Residues 617–637 (CFIVAAILALFFLFSYVIFKI) form a helical membrane-spanning segment. Topologically, residues 638 to 991 (RRDKLNKTVQ…SANDEITKVV (354 aa)) are cytoplasmic. A Protein kinase domain is found at 671-970 (IKSENIIGRG…SMLEKIEPSY (300 aa)). ATP is bound by residues 677 to 685 (IGRGGQGNV) and K699. Phosphotyrosine occurs at positions 762 and 801. D814 (proton acceptor) is an active-site residue. 2 positions are modified to phosphotyrosine: Y859 and Y866. Residue T867 is modified to Phosphothreonine. Positions 972–991 (KNSGEASYGESANDEITKVV) are disordered.

The protein belongs to the protein kinase superfamily. Ser/Thr protein kinase family. Expressed in the endosperm of fertilized ovules.

It localises to the membrane. The catalysed reaction is L-seryl-[protein] + ATP = O-phospho-L-seryl-[protein] + ADP + H(+). It carries out the reaction L-threonyl-[protein] + ATP = O-phospho-L-threonyl-[protein] + ADP + H(+). In terms of biological role, modulates the seed size by negatively regulating the cellularization of syncytial endosperm. The sequence is that of Receptor-like protein kinase HAIKU2 (IKU2) from Arabidopsis thaliana (Mouse-ear cress).